Here is a 228-residue protein sequence, read N- to C-terminus: UPF0758 protein SAB1521c (228 aa).

Residues 102–224 form the MPN domain; it reads KITQPSDVAD…FTSLVEAGYF (123 aa). Zn(2+) is bound by residues His173, His175, and Asp186. Residues 173–186 carry the JAMM motif motif; sequence HNHPSGDVTPSQED.

The protein belongs to the UPF0758 family.

The sequence is that of UPF0758 protein SAB1521c from Staphylococcus aureus (strain bovine RF122 / ET3-1).